Reading from the N-terminus, the 380-residue chain is Cytochrome b (380 aa).

The next 4 membrane-spanning stretches (helical) occupy residues 34 to 54 (FGSL…LLAA), 78 to 99 (WLLR…YLHI), 114 to 134 (WNTG…GYVL), and 179 to 199 (FFAL…IHLT). His-84 and His-98 together coordinate heme b. Residues His-183 and His-197 each coordinate heme b. His-202 is an a ubiquinone binding site. The next 4 helical transmembrane spans lie at 227–247 (LKDI…ALFH), 289–309 (LGGV…PFLH), 321–341 (LSQL…WIGS), and 348–368 (FIII…VLFP).

This sequence belongs to the cytochrome b family. In terms of assembly, the cytochrome bc1 complex contains 11 subunits: 3 respiratory subunits (MT-CYB, CYC1 and UQCRFS1), 2 core proteins (UQCRC1 and UQCRC2) and 6 low-molecular weight proteins (UQCRH/QCR6, UQCRB/QCR7, UQCRQ/QCR8, UQCR10/QCR9, UQCR11/QCR10 and a cleavage product of UQCRFS1). This cytochrome bc1 complex then forms a dimer. The cofactor is heme b.

It is found in the mitochondrion inner membrane. In terms of biological role, component of the ubiquinol-cytochrome c reductase complex (complex III or cytochrome b-c1 complex) that is part of the mitochondrial respiratory chain. The b-c1 complex mediates electron transfer from ubiquinol to cytochrome c. Contributes to the generation of a proton gradient across the mitochondrial membrane that is then used for ATP synthesis. This is Cytochrome b (MT-CYB) from Trogon curucui (Blue-crowned trogon).